Consider the following 95-residue polypeptide: DNA-directed RNA polymerase subunit Rpo6 (95 aa).

This sequence belongs to the archaeal Rpo6/eukaryotic RPB6 RNA polymerase subunit family. In terms of assembly, part of the RNA polymerase complex.

The protein resides in the cytoplasm. It catalyses the reaction RNA(n) + a ribonucleoside 5'-triphosphate = RNA(n+1) + diphosphate. DNA-dependent RNA polymerase (RNAP) catalyzes the transcription of DNA into RNA using the four ribonucleoside triphosphates as substrates. In Saccharolobus islandicus (strain M.16.27) (Sulfolobus islandicus), this protein is DNA-directed RNA polymerase subunit Rpo6.